Reading from the N-terminus, the 436-residue chain is MSVPNSPEAPWAVGQLNDQVKNWIQRLGFIWVEGQVTQVNMKSTWRFSYITLRDVNLEASVSLTVETSALKNLATPVKDGDRIVVHGKPSFYSKRGSFSLWVTEIRQVGIGQLLAQIEQLKKAMFAEGLFDPRLKTPLPFLPTTVGLITGRGSAAERDVMEVAKRRWPAVRFRVINTAVQGPKTVPQVVDALQELERDSAVDVIIVARGGGSVEDLLPFSEETLVREVSRLRTPVVSAIGHEPDNPLLDYVADVRAATPTDAAKTVVPDVVQELRIISEARQRGAGALRNWVAHERKGLAQIRTRPVMADPSLPVARQQDIIAEALQRKDRALGVHVRSLRSSIESLKAQVNALGPSQTLARGYSIVQVIPRDKSGAQVVTTVDQVTPGSQLRIRVPDGSITAAAMGVQAAPGGVMNKNSNTTDSTDNTENGTGEA.

The interval 412-436 (PGGVMNKNSNTTDSTDNTENGTGEA) is disordered. Residues 417–436 (NKNSNTTDSTDNTENGTGEA) are compositionally biased toward low complexity.

It belongs to the XseA family. Heterooligomer composed of large and small subunits.

The protein localises to the cytoplasm. The catalysed reaction is Exonucleolytic cleavage in either 5'- to 3'- or 3'- to 5'-direction to yield nucleoside 5'-phosphates.. Functionally, bidirectionally degrades single-stranded DNA into large acid-insoluble oligonucleotides, which are then degraded further into small acid-soluble oligonucleotides. The polypeptide is Exodeoxyribonuclease 7 large subunit (Corynebacterium jeikeium (strain K411)).